The primary structure comprises 341 residues: Anthranilate phosphoribosyltransferase (341 aa).

Residues G85, 88-89 (GD), T93, 95-98 (NIST), 113-121 (KHGNRSASG), and S125 each bind 5-phospho-alpha-D-ribose 1-diphosphate. An anthranilate-binding site is contributed by G85. S97 provides a ligand contact to Mg(2+). Position 116 (N116) interacts with anthranilate. R171 is a binding site for anthranilate. D230 and E231 together coordinate Mg(2+).

This sequence belongs to the anthranilate phosphoribosyltransferase family. As to quaternary structure, homodimer. The cofactor is Mg(2+).

It catalyses the reaction N-(5-phospho-beta-D-ribosyl)anthranilate + diphosphate = 5-phospho-alpha-D-ribose 1-diphosphate + anthranilate. It functions in the pathway amino-acid biosynthesis; L-tryptophan biosynthesis; L-tryptophan from chorismate: step 2/5. Functionally, catalyzes the transfer of the phosphoribosyl group of 5-phosphorylribose-1-pyrophosphate (PRPP) to anthranilate to yield N-(5'-phosphoribosyl)-anthranilate (PRA). The protein is Anthranilate phosphoribosyltransferase of Prochlorococcus marinus (strain SARG / CCMP1375 / SS120).